A 362-amino-acid polypeptide reads, in one-letter code: Aminomethyltransferase (362 aa).

The protein belongs to the GcvT family. In terms of assembly, the glycine cleavage system is composed of four proteins: P, T, L and H.

It carries out the reaction N(6)-[(R)-S(8)-aminomethyldihydrolipoyl]-L-lysyl-[protein] + (6S)-5,6,7,8-tetrahydrofolate = N(6)-[(R)-dihydrolipoyl]-L-lysyl-[protein] + (6R)-5,10-methylene-5,6,7,8-tetrahydrofolate + NH4(+). Its function is as follows. The glycine cleavage system catalyzes the degradation of glycine. The chain is Aminomethyltransferase from Listeria welshimeri serovar 6b (strain ATCC 35897 / DSM 20650 / CCUG 15529 / CIP 8149 / NCTC 11857 / SLCC 5334 / V8).